The following is a 93-amino-acid chain: UPF0298 protein lwe2074 (93 aa).

This sequence belongs to the UPF0298 family.

It localises to the cytoplasm. The polypeptide is UPF0298 protein lwe2074 (Listeria welshimeri serovar 6b (strain ATCC 35897 / DSM 20650 / CCUG 15529 / CIP 8149 / NCTC 11857 / SLCC 5334 / V8)).